Reading from the N-terminus, the 257-residue chain is UPF0246 protein Ping_3037 (257 aa).

It belongs to the UPF0246 family.

This is UPF0246 protein Ping_3037 from Psychromonas ingrahamii (strain DSM 17664 / CCUG 51855 / 37).